The primary structure comprises 99 residues: MNPDNYLYLSALLFTIGAAGVLLRRNVIVVFMCVELMLNAANLAFVAFSRMHGQLDGQVVAFFTMVVAACEVVIGLAIIMTIYRARRSASVDDANLLKH.

Helical transmembrane passes span 3-23 (PDNY…GVLL), 28-48 (IVVF…FVAF), and 59-79 (VVAF…LAII).

Belongs to the complex I subunit 4L family. As to quaternary structure, NDH-1 is composed of 14 different subunits. Subunits NuoA, H, J, K, L, M, N constitute the membrane sector of the complex.

The protein localises to the cell membrane. It catalyses the reaction a quinone + NADH + 5 H(+)(in) = a quinol + NAD(+) + 4 H(+)(out). NDH-1 shuttles electrons from NADH, via FMN and iron-sulfur (Fe-S) centers, to quinones in the respiratory chain. The immediate electron acceptor for the enzyme in this species is believed to be a menaquinone. Couples the redox reaction to proton translocation (for every two electrons transferred, four hydrogen ions are translocated across the cytoplasmic membrane), and thus conserves the redox energy in a proton gradient. This is NADH-quinone oxidoreductase subunit K from Mycobacterium sp. (strain JLS).